Consider the following 147-residue polypeptide: Small ribosomal subunit protein uS12 (147 aa).

This sequence belongs to the universal ribosomal protein uS12 family. In terms of assembly, part of the 30S ribosomal subunit.

Its function is as follows. With S4 and S5 plays an important role in translational accuracy. Located at the interface of the 30S and 50S subunits. This Methanococcus maripaludis (strain C5 / ATCC BAA-1333) protein is Small ribosomal subunit protein uS12.